The primary structure comprises 497 residues: Probable malate:quinone oxidoreductase (497 aa).

It belongs to the MQO family. Requires FAD as cofactor.

The catalysed reaction is (S)-malate + a quinone = a quinol + oxaloacetate. It functions in the pathway carbohydrate metabolism; tricarboxylic acid cycle; oxaloacetate from (S)-malate (quinone route): step 1/1. In Rhodopseudomonas palustris (strain TIE-1), this protein is Probable malate:quinone oxidoreductase.